Here is a 353-residue protein sequence, read N- to C-terminus: UDP-3-O-acylglucosamine N-acyltransferase (353 aa).

His246 acts as the Proton acceptor in catalysis.

It belongs to the transferase hexapeptide repeat family. LpxD subfamily. Homotrimer.

The catalysed reaction is a UDP-3-O-[(3R)-3-hydroxyacyl]-alpha-D-glucosamine + a (3R)-hydroxyacyl-[ACP] = a UDP-2-N,3-O-bis[(3R)-3-hydroxyacyl]-alpha-D-glucosamine + holo-[ACP] + H(+). It functions in the pathway bacterial outer membrane biogenesis; LPS lipid A biosynthesis. Its function is as follows. Catalyzes the N-acylation of UDP-3-O-acylglucosamine using 3-hydroxyacyl-ACP as the acyl donor. Is involved in the biosynthesis of lipid A, a phosphorylated glycolipid that anchors the lipopolysaccharide to the outer membrane of the cell. The protein is UDP-3-O-acylglucosamine N-acyltransferase of Chlorobaculum tepidum (strain ATCC 49652 / DSM 12025 / NBRC 103806 / TLS) (Chlorobium tepidum).